The primary structure comprises 282 residues: Parvulin-like PPIase (282 aa).

The first 20 residues, 1–20 (MKKLSVIFLSVSMLSGIAFA), serve as a signal peptide directing secretion. The 94-residue stretch at 138-231 (KEQIKVAHIL…FGWHIIKVLE (94 aa)) folds into the PpiC domain.

Belongs to the PpiC/parvulin rotamase family.

Its subcellular location is the cell outer membrane. The enzyme catalyses [protein]-peptidylproline (omega=180) = [protein]-peptidylproline (omega=0). The polypeptide is Parvulin-like PPIase (plp) (Rickettsia felis (strain ATCC VR-1525 / URRWXCal2) (Rickettsia azadi)).